Consider the following 432-residue polypeptide: Adenylosuccinate synthetase (432 aa).

GTP is bound by residues 13-19 (GDEGKGK) and 41-43 (GHT). Residue aspartate 14 is the Proton acceptor of the active site. Residues aspartate 14 and glycine 41 each contribute to the Mg(2+) site. IMP is bound by residues 14-17 (DEGK), 39-42 (NAGH), threonine 130, arginine 144, glutamine 225, threonine 240, and arginine 304. The active-site Proton donor is histidine 42. 300–306 (ATTGRRR) contributes to the substrate binding site. Residues arginine 306, 332 to 334 (KLD), and 415 to 417 (STG) each bind GTP.

It belongs to the adenylosuccinate synthetase family. Homodimer. The cofactor is Mg(2+).

It localises to the cytoplasm. The enzyme catalyses IMP + L-aspartate + GTP = N(6)-(1,2-dicarboxyethyl)-AMP + GDP + phosphate + 2 H(+). It functions in the pathway purine metabolism; AMP biosynthesis via de novo pathway; AMP from IMP: step 1/2. In terms of biological role, plays an important role in the de novo pathway of purine nucleotide biosynthesis. Catalyzes the first committed step in the biosynthesis of AMP from IMP. The chain is Adenylosuccinate synthetase from Salmonella heidelberg (strain SL476).